Consider the following 64-residue polypeptide: Beta-insect depressant toxin BmKIT4 (64 aa).

One can recognise an LCN-type CS-alpha/beta domain in the interval 1 to 61 (DGYIRGSNGC…TWKSESNTCG (61 aa)). 4 disulfide bridges follow: Cys10–Cys60, Cys14–Cys35, Cys21–Cys42, and Cys25–Cys44. Residue Cys60 is modified to Cysteine amide.

This sequence belongs to the long (4 C-C) scorpion toxin superfamily. Sodium channel inhibitor family. Beta subfamily. As to expression, expressed by the venom gland.

It localises to the secreted. Depressant insect beta-toxins cause a transient contraction paralysis followed by a slow flaccid paralysis. They bind voltage-independently at site-4 of sodium channels (Nav) and shift the voltage of activation toward more negative potentials thereby affecting sodium channel activation and promoting spontaneous and repetitive firing. This toxin is active only on insects. In Olivierus martensii (Manchurian scorpion), this protein is Beta-insect depressant toxin BmKIT4.